Here is a 540-residue protein sequence, read N- to C-terminus: Pentatricopeptide repeat-containing protein At1g14470 (540 aa).

14 PPR repeats span residues 70–104 (NVFV…GIMP), 105–134 (DAFS…GFFK), 135–165 (DPYV…ISQR), 166–196 (KGSD…MPEN), 197–227 (DVVS…MPEK), 228–262 (SVVS…GVRP), 263–297 (NETT…RVRL), 298–328 (NCFV…LGTQ), 330–364 (NLVT…NVVS), 365–395 (WNSL…GDSK), 397–431 (DEVT…QIKL), 432–462 (NDSG…MKER), 463–497 (DVVS…GIEP), and 498–528 (DRVT…IRNP).

This sequence belongs to the PPR family. PCMP-A subfamily.

The polypeptide is Pentatricopeptide repeat-containing protein At1g14470 (PCMP-A4) (Arabidopsis thaliana (Mouse-ear cress)).